Consider the following 234-residue polypeptide: Leucyl/phenylalanyl-tRNA--protein transferase (234 aa).

Belongs to the L/F-transferase family.

It is found in the cytoplasm. The enzyme catalyses N-terminal L-lysyl-[protein] + L-leucyl-tRNA(Leu) = N-terminal L-leucyl-L-lysyl-[protein] + tRNA(Leu) + H(+). It carries out the reaction N-terminal L-arginyl-[protein] + L-leucyl-tRNA(Leu) = N-terminal L-leucyl-L-arginyl-[protein] + tRNA(Leu) + H(+). The catalysed reaction is L-phenylalanyl-tRNA(Phe) + an N-terminal L-alpha-aminoacyl-[protein] = an N-terminal L-phenylalanyl-L-alpha-aminoacyl-[protein] + tRNA(Phe). In terms of biological role, functions in the N-end rule pathway of protein degradation where it conjugates Leu, Phe and, less efficiently, Met from aminoacyl-tRNAs to the N-termini of proteins containing an N-terminal arginine or lysine. In Myxococcus xanthus (strain DK1622), this protein is Leucyl/phenylalanyl-tRNA--protein transferase.